Here is a 423-residue protein sequence, read N- to C-terminus: Putative competence-damage inducible protein (423 aa).

The protein belongs to the CinA family.

This is Putative competence-damage inducible protein from Streptococcus pyogenes serotype M1.